The sequence spans 552 residues: CTP synthase (552 aa).

The amidoligase domain stretch occupies residues 1 to 270; it reads MTKYVFVTGG…DRIICDELKL (270 aa). A CTP-binding site is contributed by serine 13. Position 13 (serine 13) interacts with UTP. Residues 14–19 and aspartate 71 contribute to the ATP site; that span reads SLGKGI. Aspartate 71 and glutamate 144 together coordinate Mg(2+). Residues 151 to 153, 191 to 196, and lysine 227 each bind CTP; these read DIE and KTKPTQ. UTP is bound by residues 191 to 196 and lysine 227; that span reads KTKPTQ. In terms of domain architecture, Glutamine amidotransferase type-1 spans 295-547; that stretch reads TIGMVGKYVD…VEAALANKQA (253 aa). Position 356 (glycine 356) interacts with L-glutamine. The Nucleophile; for glutamine hydrolysis role is filled by cysteine 383. Residues 384 to 387, glutamate 407, and arginine 473 contribute to the L-glutamine site; that span reads LGMQ. Active-site residues include histidine 520 and glutamate 522.

It belongs to the CTP synthase family. As to quaternary structure, homotetramer.

It catalyses the reaction UTP + L-glutamine + ATP + H2O = CTP + L-glutamate + ADP + phosphate + 2 H(+). The catalysed reaction is L-glutamine + H2O = L-glutamate + NH4(+). It carries out the reaction UTP + NH4(+) + ATP = CTP + ADP + phosphate + 2 H(+). The protein operates within pyrimidine metabolism; CTP biosynthesis via de novo pathway; CTP from UDP: step 2/2. Its activity is regulated as follows. Allosterically activated by GTP, when glutamine is the substrate; GTP has no effect on the reaction when ammonia is the substrate. The allosteric effector GTP functions by stabilizing the protein conformation that binds the tetrahedral intermediate(s) formed during glutamine hydrolysis. Inhibited by the product CTP, via allosteric rather than competitive inhibition. In terms of biological role, catalyzes the ATP-dependent amination of UTP to CTP with either L-glutamine or ammonia as the source of nitrogen. Regulates intracellular CTP levels through interactions with the four ribonucleotide triphosphates. The polypeptide is CTP synthase (Burkholderia vietnamiensis (strain G4 / LMG 22486) (Burkholderia cepacia (strain R1808))).